Consider the following 149-residue polypeptide: Large ribosomal subunit protein bL9 (149 aa).

This sequence belongs to the bacterial ribosomal protein bL9 family.

Functionally, binds to the 23S rRNA. In Ligilactobacillus salivarius (strain UCC118) (Lactobacillus salivarius), this protein is Large ribosomal subunit protein bL9.